Reading from the N-terminus, the 237-residue chain is D-aminoacyl-tRNA deacylase (237 aa).

The protein belongs to the DtdA deacylase family. In terms of assembly, monomer. Zn(2+) is required as a cofactor.

It catalyses the reaction a D-aminoacyl-tRNA + H2O = a tRNA + a D-alpha-amino acid + H(+). The catalysed reaction is glycyl-tRNA(Ala) + H2O = tRNA(Ala) + glycine + H(+). Functionally, D-aminoacyl-tRNA deacylase with broad substrate specificity. By recycling D-aminoacyl-tRNA to D-amino acids and free tRNA molecules, this enzyme counteracts the toxicity associated with the formation of D-aminoacyl-tRNA entities in vivo. The polypeptide is D-aminoacyl-tRNA deacylase (Sulfurisphaera tokodaii (strain DSM 16993 / JCM 10545 / NBRC 100140 / 7) (Sulfolobus tokodaii)).